The sequence spans 198 residues: Ribonuclease HII (198 aa).

In terms of domain architecture, RNase H type-2 spans 11–198; the sequence is NLIAGVDEVG…GPVKRVLGLV (188 aa). A divalent metal cation-binding residues include aspartate 17, glutamate 18, and aspartate 109.

This sequence belongs to the RNase HII family. It depends on Mn(2+) as a cofactor. Mg(2+) serves as cofactor.

The protein localises to the cytoplasm. The enzyme catalyses Endonucleolytic cleavage to 5'-phosphomonoester.. In terms of biological role, endonuclease that specifically degrades the RNA of RNA-DNA hybrids. The protein is Ribonuclease HII of Yersinia enterocolitica serotype O:8 / biotype 1B (strain NCTC 13174 / 8081).